The sequence spans 501 residues: Alpha-internexin (501 aa).

Residues 1-87 are head; sequence MSFGSEHYLC…SQAAARTNEY (87 aa). Ser72 bears the Phosphoserine mark. Residues 88–129 are coil 1A; sequence KIIRTNEKEQLQGLNDRFAVFIEKVHQLETQNRALEAELAAL. The region spanning 94–407 is the IF rod domain; sequence EKEQLQGLND…KLLEGEETRF (314 aa). The tract at residues 130–142 is linker 1; sequence RQRHAEPSRVGEL. The tract at residues 143 to 238 is coil 1B; sequence FQRELRELRA…QVHDEEVAEL (96 aa). A Phosphoserine modification is found at Ser219. The linker 2 stretch occupies residues 239 to 262; sequence LATLQASSQAAAEVDVAVAKPDLT. Residues 263-408 are coil 2; that stretch reads SALREIRAQY…LLEGEETRFS (146 aa). The residue at position 290 (Lys290) is an N6-acetyllysine. Residues Ser335 and Ser498 each carry the phosphoserine modification. Residues 409–501 form a tail region; sequence TGGLSISGLN…EESTSSSQKM (93 aa). A disordered region spans residues 441-501; it reads SAGLSLKKEE…EESTSSSQKM (61 aa). The segment covering 488–501 has biased composition (polar residues); sequence KSATEESTSSSQKM.

It belongs to the intermediate filament family. In terms of assembly, forms homodimers (in vitro). Forms heterodimers with NEFL, NEFM or NEFH (in vitro). O-glycosylated.

Class-IV neuronal intermediate filament that is able to self-assemble. It is involved in the morphogenesis of neurons. It may form an independent structural network without the involvement of other neurofilaments or it may cooperate with NEFL to form the filamentous backbone to which NEFM and NEFH attach to form the cross-bridges. May also cooperate with the neuronal intermediate filament protein PRPH to form filamentous networks. This is Alpha-internexin (Ina) from Mus musculus (Mouse).